We begin with the raw amino-acid sequence, 264 residues long: MKNHMSDMSPEEVRQLVRKGQMTGPTAGMAASYAQANLVVLQKDLAFDFLLFCQRNQKPCPVLDVTDAGSPVPAIAAPGADIRTDFPKYRIYRHGVLTEEVTDITPYWKDDDVGFLIGCSFSFEQALINQHIPIRHIDEGVNVPMYKTDIDCVPAGPFSGKMVVSMRPIPERLAVRAAQVTSRFPAVHGAPVRIGNPQSIGISDLHQPDFGDAVTVREGEVPVFWACGVTPQAVIMEAKPDIVITHSPGHMLITDIRNESLAVL.

This sequence belongs to the D-glutamate cyclase family.

The protein is Putative hydro-lyase RBAM_004300 of Bacillus velezensis (strain DSM 23117 / BGSC 10A6 / LMG 26770 / FZB42) (Bacillus amyloliquefaciens subsp. plantarum).